The following is a 1183-amino-acid chain: DNA-directed RNA polymerase subunit beta (1183 aa).

It belongs to the RNA polymerase beta chain family. The RNAP catalytic core consists of 2 alpha, 1 beta, 1 beta' and 1 omega subunit. When a sigma factor is associated with the core the holoenzyme is formed, which can initiate transcription.

The enzyme catalyses RNA(n) + a ribonucleoside 5'-triphosphate = RNA(n+1) + diphosphate. Its function is as follows. DNA-dependent RNA polymerase catalyzes the transcription of DNA into RNA using the four ribonucleoside triphosphates as substrates. The sequence is that of DNA-directed RNA polymerase subunit beta from Staphylococcus aureus (strain JH9).